The following is a 161-amino-acid chain: Globin CTT-IX (161 aa).

Residues 1 to 16 (MKFFIVLALCIVGAIA) form the signal peptide. Residues 18–161 (PVSSDQANAI…NIFGMIFAHL (144 aa)) form the Globin domain. Heme b-binding residues include H76 and H111.

This sequence belongs to the globin family. Homodimer.

This is Globin CTT-IX (CTT-9) from Chironomus thummi thummi (Midge).